The following is a 363-amino-acid chain: Ethanolamine kinase 1 (363 aa).

This sequence belongs to the choline/ethanolamine kinase family.

It localises to the cytoplasm. It catalyses the reaction ethanolamine + ATP = phosphoethanolamine + ADP + H(+). It functions in the pathway phospholipid metabolism; phosphatidylethanolamine biosynthesis; phosphatidylethanolamine from ethanolamine: step 1/3. Highly specific for ethanolamine phosphorylation. May be a rate-controlling step in phosphatidylethanolamine biosynthesis. The protein is Ethanolamine kinase 1 (Etnk1) of Mus musculus (Mouse).